Consider the following 360-residue polypeptide: D-alanine--D-alanine ligase (360 aa).

Residues 146 to 352 (KLCAVQAGIH…FTELIDRLVR (207 aa)) form the ATP-grasp domain. 179–234 (KKRFAPPFFVKPANLGSSVGIAKIHSFDELENALDEACRLDVKILVEKAIEGREVE) is an ATP binding site. Residues Asp305, Glu319, and Asn321 each coordinate Mg(2+).

Belongs to the D-alanine--D-alanine ligase family. Mg(2+) serves as cofactor. Mn(2+) is required as a cofactor.

It localises to the cytoplasm. The enzyme catalyses 2 D-alanine + ATP = D-alanyl-D-alanine + ADP + phosphate + H(+). It functions in the pathway cell wall biogenesis; peptidoglycan biosynthesis. In terms of biological role, cell wall formation. The chain is D-alanine--D-alanine ligase from Chlorobium phaeobacteroides (strain BS1).